We begin with the raw amino-acid sequence, 527 residues long: Phosphoenolpyruvate carboxykinase (ATP) (527 aa).

Substrate is bound by residues Arg-54, Tyr-190, and Lys-196. ATP contacts are provided by residues Lys-196, His-215, and 231 to 239 (GLSGTGKTT). The Mn(2+) site is built by Lys-196 and His-215. Residue Asp-252 participates in Mn(2+) binding. ATP contacts are provided by residues Glu-280, Arg-317, 436 to 437 (RI), and Thr-442. Residue Arg-317 participates in substrate binding.

The protein belongs to the phosphoenolpyruvate carboxykinase (ATP) family. Mn(2+) serves as cofactor.

It is found in the cytoplasm. The enzyme catalyses oxaloacetate + ATP = phosphoenolpyruvate + ADP + CO2. Its pathway is carbohydrate biosynthesis; gluconeogenesis. Its function is as follows. Involved in the gluconeogenesis. Catalyzes the conversion of oxaloacetate (OAA) to phosphoenolpyruvate (PEP) through direct phosphoryl transfer between the nucleoside triphosphate and OAA. The chain is Phosphoenolpyruvate carboxykinase (ATP) from Oceanobacillus iheyensis (strain DSM 14371 / CIP 107618 / JCM 11309 / KCTC 3954 / HTE831).